Reading from the N-terminus, the 105-residue chain is Large ribosomal subunit protein bL21 (105 aa).

This sequence belongs to the bacterial ribosomal protein bL21 family. Part of the 50S ribosomal subunit. Contacts protein L20.

Functionally, this protein binds to 23S rRNA in the presence of protein L20. This Rhizobium rhizogenes (strain K84 / ATCC BAA-868) (Agrobacterium radiobacter) protein is Large ribosomal subunit protein bL21.